The chain runs to 355 residues: Peptide chain release factor 1 (355 aa).

An N5-methylglutamine modification is found at Q233.

The protein belongs to the prokaryotic/mitochondrial release factor family. Post-translationally, methylated by PrmC. Methylation increases the termination efficiency of RF1.

It is found in the cytoplasm. Its function is as follows. Peptide chain release factor 1 directs the termination of translation in response to the peptide chain termination codons UAG and UAA. This is Peptide chain release factor 1 from Desulforudis audaxviator (strain MP104C).